We begin with the raw amino-acid sequence, 487 residues long: Chromosomal replication initiator protein DnaA (487 aa).

A domain I, interacts with DnaA modulators region spans residues 1–92 (MTIKGGVVSQ…SELWTANDAT (92 aa)). A domain II region spans residues 92–144 (TGRRLDLKSRLEFESVGGAGYEAKAEPIEIVLPVSSDVPALAPTNGSKPSPVQ). A domain III, AAA+ region region spans residues 145 to 367 (GLQERFTFDT…GALNTLSARA (223 aa)). Positions 189, 191, 192, and 193 each coordinate ATP. The tract at residues 368 to 487 (GEGVSRLTLE…LETITRKLRG (120 aa)) is domain IV, binds dsDNA.

It belongs to the DnaA family. In terms of assembly, oligomerizes as a right-handed, spiral filament on DNA at oriC.

The protein localises to the cytoplasm. Plays an essential role in the initiation and regulation of chromosomal replication. ATP-DnaA binds to the origin of replication (oriC) to initiate formation of the DNA replication initiation complex once per cell cycle. Binds the DnaA box (a 9 base pair repeat at the origin) and separates the double-stranded (ds)DNA. Forms a right-handed helical filament on oriC DNA; dsDNA binds to the exterior of the filament while single-stranded (ss)DNA is stabiized in the filament's interior. The ATP-DnaA-oriC complex binds and stabilizes one strand of the AT-rich DNA unwinding element (DUE), permitting loading of DNA polymerase. After initiation quickly degrades to an ADP-DnaA complex that is not apt for DNA replication. Binds acidic phospholipids. The protein is Chromosomal replication initiator protein DnaA of Caulobacter sp. (strain K31).